The following is a 269-amino-acid chain: Histone deacetylase HDT1 (269 aa).

The disordered stretch occupies residues 97-269 (PFEEEEDDED…HSKAKHSAGK (173 aa)). 2 stretches are compositionally biased toward acidic residues: residues 98–115 (FEEE…DEDI) and 153–179 (KDDE…DSEE). The segment covering 228–238 (PSKQASKTPKS) has biased composition (polar residues). The C2H2-type zinc finger occupies 242 to 265 (HHCKPCNRSFGSEGALDSHSKAKH).

This sequence belongs to the histone deacetylase HD2 family. In terms of tissue distribution, predominantly expressed in ovaries. Accumulates predominantly in the micropylar region of the ovule's integument.

The protein resides in the nucleus. It localises to the nucleolus. Mediates the deacetylation of lysine residues on the N-terminal part of the core histones (H2A, H2B, H3 and H4). Histone deacetylation gives a tag for epigenetic repression and plays an important role in transcriptional regulation, cell cycle progression and developmental events. The polypeptide is Histone deacetylase HDT1 (HDT1) (Solanum chacoense (Chaco potato)).